Here is a 275-residue protein sequence, read N- to C-terminus: Polyamine aminopropyltransferase (275 aa).

The PABS domain occupies 2–235 (EFWFTEKQTE…GMWTFTIGSK (234 aa)). Gln31 is an S-methyl-5'-thioadenosine binding site. His62 and Asp86 together coordinate spermidine. S-methyl-5'-thioadenosine is bound by residues Asp106 and 137–138 (DG). Residue Asp155 is the Proton acceptor of the active site. 155 to 158 (DSTE) contacts spermidine. Pro162 lines the S-methyl-5'-thioadenosine pocket.

Belongs to the spermidine/spermine synthase family. Homodimer or homotetramer.

The protein resides in the cytoplasm. The catalysed reaction is S-adenosyl 3-(methylsulfanyl)propylamine + putrescine = S-methyl-5'-thioadenosine + spermidine + H(+). The protein operates within amine and polyamine biosynthesis; spermidine biosynthesis; spermidine from putrescine: step 1/1. Its function is as follows. Catalyzes the irreversible transfer of a propylamine group from the amino donor S-adenosylmethioninamine (decarboxy-AdoMet) to putrescine (1,4-diaminobutane) to yield spermidine. The chain is Polyamine aminopropyltransferase from Shouchella clausii (strain KSM-K16) (Alkalihalobacillus clausii).